Consider the following 389-residue polypeptide: Succinate--CoA ligase [ADP-forming] subunit beta (389 aa).

An ATP-grasp domain is found at 9–244 (KQLLAEYGIP…KTQEDETEVT (236 aa)). ATP is bound by residues Lys46, 53–55 (GRG), Gly102, and Glu107. Positions 199 and 213 each coordinate Mg(2+). Substrate is bound by residues Asn264 and 321-323 (GIV).

It belongs to the succinate/malate CoA ligase beta subunit family. Heterotetramer of two alpha and two beta subunits. Mg(2+) serves as cofactor.

It carries out the reaction succinate + ATP + CoA = succinyl-CoA + ADP + phosphate. It catalyses the reaction GTP + succinate + CoA = succinyl-CoA + GDP + phosphate. It functions in the pathway carbohydrate metabolism; tricarboxylic acid cycle; succinate from succinyl-CoA (ligase route): step 1/1. Functionally, succinyl-CoA synthetase functions in the citric acid cycle (TCA), coupling the hydrolysis of succinyl-CoA to the synthesis of either ATP or GTP and thus represents the only step of substrate-level phosphorylation in the TCA. The beta subunit provides nucleotide specificity of the enzyme and binds the substrate succinate, while the binding sites for coenzyme A and phosphate are found in the alpha subunit. The chain is Succinate--CoA ligase [ADP-forming] subunit beta from Xanthomonas axonopodis pv. citri (strain 306).